Here is a 339-residue protein sequence, read N- to C-terminus: Protein RecA (339 aa).

66–73 lines the ATP pocket; sequence GPESSGKT.

Belongs to the RecA family.

The protein resides in the cytoplasm. Its function is as follows. Can catalyze the hydrolysis of ATP in the presence of single-stranded DNA, the ATP-dependent uptake of single-stranded DNA by duplex DNA, and the ATP-dependent hybridization of homologous single-stranded DNAs. It interacts with LexA causing its activation and leading to its autocatalytic cleavage. The chain is Protein RecA from Geobacter metallireducens (strain ATCC 53774 / DSM 7210 / GS-15).